Consider the following 491-residue polypeptide: UDP-N-acetylmuramate--L-alanine ligase (491 aa).

126 to 132 contributes to the ATP binding site; the sequence is GTHGKTT.

Belongs to the MurCDEF family.

It is found in the cytoplasm. It catalyses the reaction UDP-N-acetyl-alpha-D-muramate + L-alanine + ATP = UDP-N-acetyl-alpha-D-muramoyl-L-alanine + ADP + phosphate + H(+). It participates in cell wall biogenesis; peptidoglycan biosynthesis. In terms of biological role, cell wall formation. The sequence is that of UDP-N-acetylmuramate--L-alanine ligase from Yersinia pestis (strain Pestoides F).